A 146-amino-acid chain; its full sequence is VHLTGEEKSAVAALWSKVNVDEVGGEALGRLLVVYPWTQRFFESFGALSSPDAVMGNPKVKAHGKKVLGAFSDGLAHLDNLKGTFAQLSELHCDKLHVDPENFRLLGNVLVCVLARNFGKEFTPRVQAAFQKVVAGVATALAHKYH.

The Globin domain maps to 2 to 146 (HLTGEEKSAV…VATALAHKYH (145 aa)). Position 50 is a phosphoserine (Ser-50). Heme b-binding residues include His-63 and His-92.

Belongs to the globin family. As to quaternary structure, heterotetramer of two delta chains and two alpha chains. In terms of tissue distribution, red blood cells.

This is Hemoglobin subunit delta (HBD) from Leontocebus nigricollis (Black-mantled tamarin).